Here is a 473-residue protein sequence, read N- to C-terminus: Ribulose bisphosphate carboxylase large chain 3 (473 aa).

Substrate is bound by residues Asn-116 and Thr-166. Lys-168 acts as the Proton acceptor in catalysis. Residue Lys-170 coordinates substrate. The Mg(2+) site is built by Lys-194, Asp-196, and Glu-197. Lys-194 carries the N6-carboxylysine modification. His-287 serves as the catalytic Proton acceptor. Substrate is bound by residues Arg-288, His-320, and Ser-372.

It belongs to the RuBisCO large chain family. Type I subfamily. Heterohexadecamer of 8 large chains and 8 small chains. It depends on Mg(2+) as a cofactor.

It catalyses the reaction 2 (2R)-3-phosphoglycerate + 2 H(+) = D-ribulose 1,5-bisphosphate + CO2 + H2O. It carries out the reaction D-ribulose 1,5-bisphosphate + O2 = 2-phosphoglycolate + (2R)-3-phosphoglycerate + 2 H(+). Its function is as follows. RuBisCO catalyzes two reactions: the carboxylation of D-ribulose 1,5-bisphosphate, the primary event in carbon dioxide fixation, as well as the oxidative fragmentation of the pentose substrate. Both reactions occur simultaneously and in competition at the same active site. The polypeptide is Ribulose bisphosphate carboxylase large chain 3 (Nitrobacter hamburgensis (strain DSM 10229 / NCIMB 13809 / X14)).